Consider the following 260-residue polypeptide: Small ribosomal subunit protein uS3 (260 aa).

Residues 39-114 (LRQYIEQKLG…QIRINVVEVQ (76 aa)) enclose the KH type-2 domain. Residues 218–260 (QEVATPPPSPRDRDRDRGDRDREPRRRQQQRRRQQFEDRSNEG) form a disordered region. Basic and acidic residues-rich tracts occupy residues 227 to 243 (PRDR…EPRR) and 251 to 260 (QQFEDRSNEG).

It belongs to the universal ribosomal protein uS3 family. In terms of assembly, part of the 30S ribosomal subunit. Forms a tight complex with proteins S10 and S14.

In terms of biological role, binds the lower part of the 30S subunit head. Binds mRNA in the 70S ribosome, positioning it for translation. The protein is Small ribosomal subunit protein uS3 of Nostoc sp. (strain PCC 7120 / SAG 25.82 / UTEX 2576).